The sequence spans 1235 residues: ATP-dependent helicase/nuclease subunit A (1235 aa).

One can recognise a UvrD-like helicase ATP-binding domain in the interval 12–482; that stretch reads ALWTDDQWKA…IDLSQNFRSR (471 aa). 33–40 is an ATP binding site; it reads AAAGSGKT. The 292-residue stretch at 509–800 folds into the UvrD-like helicase C-terminal domain; sequence AAELTLGASF…RMMTIHASKG (292 aa).

It belongs to the helicase family. AddA subfamily. As to quaternary structure, heterodimer of AddA and AddB/RexB. Mg(2+) is required as a cofactor.

It catalyses the reaction Couples ATP hydrolysis with the unwinding of duplex DNA by translocating in the 3'-5' direction.. The catalysed reaction is ATP + H2O = ADP + phosphate + H(+). Its function is as follows. The heterodimer acts as both an ATP-dependent DNA helicase and an ATP-dependent, dual-direction single-stranded exonuclease. Recognizes the chi site generating a DNA molecule suitable for the initiation of homologous recombination. The AddA nuclease domain is required for chi fragment generation; this subunit has the helicase and 3' -&gt; 5' nuclease activities. This Listeria innocua serovar 6a (strain ATCC BAA-680 / CLIP 11262) protein is ATP-dependent helicase/nuclease subunit A.